A 324-amino-acid polypeptide reads, in one-letter code: UDP-N-acetylenolpyruvoylglucosamine reductase (324 aa).

Residues 36–203 (FRAGGLAELM…TSVLFEGYPE (168 aa)) enclose the FAD-binding PCMH-type domain. The active site involves arginine 183. Residue serine 232 is the Proton donor of the active site. The active site involves glutamate 302.

It belongs to the MurB family. FAD serves as cofactor.

The protein resides in the cytoplasm. The enzyme catalyses UDP-N-acetyl-alpha-D-muramate + NADP(+) = UDP-N-acetyl-3-O-(1-carboxyvinyl)-alpha-D-glucosamine + NADPH + H(+). The protein operates within cell wall biogenesis; peptidoglycan biosynthesis. In terms of biological role, cell wall formation. This chain is UDP-N-acetylenolpyruvoylglucosamine reductase, found in Rhizobium etli (strain CIAT 652).